We begin with the raw amino-acid sequence, 261 residues long: Hemin import ATP-binding protein HmuV (261 aa).

The 237-residue stretch at leucine 5 to aspartate 241 folds into the ABC transporter domain. Position 37-44 (glycine 37–serine 44) interacts with ATP.

It belongs to the ABC transporter superfamily. Heme (hemin) importer (TC 3.A.1.14.5) family. In terms of assembly, the complex is composed of two ATP-binding proteins (HmuV), two transmembrane proteins (HmuU) and a solute-binding protein (HmuT).

The protein localises to the cell inner membrane. Its function is as follows. Part of the ABC transporter complex HmuTUV involved in hemin import. Responsible for energy coupling to the transport system. In Rhodopseudomonas palustris (strain BisB5), this protein is Hemin import ATP-binding protein HmuV.